Here is a 157-residue protein sequence, read N- to C-terminus: SsrA-binding protein (157 aa).

It belongs to the SmpB family.

It is found in the cytoplasm. Functionally, required for rescue of stalled ribosomes mediated by trans-translation. Binds to transfer-messenger RNA (tmRNA), required for stable association of tmRNA with ribosomes. tmRNA and SmpB together mimic tRNA shape, replacing the anticodon stem-loop with SmpB. tmRNA is encoded by the ssrA gene; the 2 termini fold to resemble tRNA(Ala) and it encodes a 'tag peptide', a short internal open reading frame. During trans-translation Ala-aminoacylated tmRNA acts like a tRNA, entering the A-site of stalled ribosomes, displacing the stalled mRNA. The ribosome then switches to translate the ORF on the tmRNA; the nascent peptide is terminated with the 'tag peptide' encoded by the tmRNA and targeted for degradation. The ribosome is freed to recommence translation, which seems to be the essential function of trans-translation. This is SsrA-binding protein from Chlorobaculum tepidum (strain ATCC 49652 / DSM 12025 / NBRC 103806 / TLS) (Chlorobium tepidum).